A 318-amino-acid polypeptide reads, in one-letter code: Biotin synthase (318 aa).

A Radical SAM core domain is found at 44–273 (LCGNKFDLCT…TVQIRLAGGR (230 aa)). Residues Cys-62, Cys-66, and Cys-69 each coordinate [4Fe-4S] cluster. 4 residues coordinate [2Fe-2S] cluster: Ser-106, Cys-138, Cys-198, and Arg-268.

The protein belongs to the radical SAM superfamily. Biotin synthase family. Homodimer. It depends on [4Fe-4S] cluster as a cofactor. [2Fe-2S] cluster serves as cofactor.

The enzyme catalyses (4R,5S)-dethiobiotin + (sulfur carrier)-SH + 2 reduced [2Fe-2S]-[ferredoxin] + 2 S-adenosyl-L-methionine = (sulfur carrier)-H + biotin + 2 5'-deoxyadenosine + 2 L-methionine + 2 oxidized [2Fe-2S]-[ferredoxin]. Its pathway is cofactor biosynthesis; biotin biosynthesis; biotin from 7,8-diaminononanoate: step 2/2. Functionally, catalyzes the conversion of dethiobiotin (DTB) to biotin by the insertion of a sulfur atom into dethiobiotin via a radical-based mechanism. The sequence is that of Biotin synthase from Clostridium botulinum (strain Langeland / NCTC 10281 / Type F).